The primary structure comprises 84 residues: Cell division topological specificity factor (84 aa).

The protein belongs to the MinE family.

Functionally, prevents the cell division inhibition by proteins MinC and MinD at internal division sites while permitting inhibition at polar sites. This ensures cell division at the proper site by restricting the formation of a division septum at the midpoint of the long axis of the cell. This is Cell division topological specificity factor from Burkholderia ambifaria (strain MC40-6).